A 489-amino-acid polypeptide reads, in one-letter code: L-asparagine permease 1 (489 aa).

12 helical membrane-spanning segments follow: residues 25–45, 49–69, 100–120, 137–157, 162–182, 210–230, 255–275, 289–309, 344–364, 369–389, 413–433, and 439–459; these read QLQM…GASG, KAGP…FLIL, AVGW…TTAI, ILAL…VEWF, FWAA…GTVF, WLPL…VELV, IAIF…YTAY, IGFH…ALSS, YGGI…NAFK, FEIV…TIVL, SPYS…TMAS, and TWTV…WYLV.

Belongs to the amino acid-polyamine-organocation (APC) superfamily. Amino acid transporter (AAT) (TC 2.A.3.1) family.

It is found in the cell membrane. This is L-asparagine permease 1 (ansP1) from Mycobacterium bovis (strain ATCC BAA-935 / AF2122/97).